A 359-amino-acid polypeptide reads, in one-letter code: Peptide chain release factor 1 (359 aa).

Glutamine 235 carries the N5-methylglutamine modification. The tract at residues 282 to 306 is disordered; it reads RQRADSERSADRKSQVGSGDRSERI.

The protein belongs to the prokaryotic/mitochondrial release factor family. Methylated by PrmC. Methylation increases the termination efficiency of RF1.

The protein localises to the cytoplasm. Functionally, peptide chain release factor 1 directs the termination of translation in response to the peptide chain termination codons UAG and UAA. This Rhizobium rhizogenes (strain K84 / ATCC BAA-868) (Agrobacterium radiobacter) protein is Peptide chain release factor 1.